Here is a 178-residue protein sequence, read N- to C-terminus: Leukemia NUP98 fusion partner 1 (178 aa).

3 disordered regions span residues E28 to V55, S89 to I108, and I147 to E178. Residues R34–T47 are compositionally biased toward basic residues. A compositionally biased stretch (basic and acidic residues) spans I147–A167.

This Homo sapiens (Human) protein is Leukemia NUP98 fusion partner 1 (LNP1).